The chain runs to 378 residues: Glutamate 5-kinase (378 aa).

Lys19 is an ATP binding site. Substrate contacts are provided by Ser59, Asp146, and Asn158. Residue 178–179 (TD) coordinates ATP. Residues 285–363 (RGSVTVDPGA…SEFEKLLGYT (79 aa)) enclose the PUA domain.

This sequence belongs to the glutamate 5-kinase family.

It localises to the cytoplasm. The enzyme catalyses L-glutamate + ATP = L-glutamyl 5-phosphate + ADP. Its pathway is amino-acid biosynthesis; L-proline biosynthesis; L-glutamate 5-semialdehyde from L-glutamate: step 1/2. Catalyzes the transfer of a phosphate group to glutamate to form L-glutamate 5-phosphate. This is Glutamate 5-kinase from Polaromonas naphthalenivorans (strain CJ2).